We begin with the raw amino-acid sequence, 84 residues long: ORF8b protein (84 aa).

One can recognise an SARS ORF8 Ig-like domain in the interval 1–82 (MCLKILVRYN…RDVLVVLNKR (82 aa)). Cysteines 22 and 40 form a disulfide.

It is found in the host cytoplasm. It localises to the host nucleus. Non-structural protein which is dispensable for virus replication in cell culture. The protein is ORF8b protein of Severe acute respiratory syndrome coronavirus (SARS-CoV).